We begin with the raw amino-acid sequence, 151 residues long: Transcription antitermination protein NusB (151 aa).

The protein belongs to the NusB family.

Involved in transcription antitermination. Required for transcription of ribosomal RNA (rRNA) genes. Binds specifically to the boxA antiterminator sequence of the ribosomal RNA (rrn) operons. This chain is Transcription antitermination protein NusB, found in Thermodesulfovibrio yellowstonii (strain ATCC 51303 / DSM 11347 / YP87).